The chain runs to 222 residues: Cyclin-dependent kinase inhibitor 3 (222 aa).

The disordered stretch occupies residues 68-101; it reads KPSSLIEPKQPPRVHRSGIKESGSRSRVDSVNSV. Residues 85–95 show a composition bias toward basic and acidic residues; it reads GIKESGSRSRV.

It belongs to the CDI family. ICK/KRP subfamily. In terms of assembly, specifically interacts with CDKA-1, but not with CDKB1-1.

Its subcellular location is the nucleus. It is found in the nucleoplasm. Functionally, binds and inhibits CYCD2-1/CDKA-1 complex kinase activity. May target specifically CDKA-1. This is Cyclin-dependent kinase inhibitor 3 (KRP3) from Arabidopsis thaliana (Mouse-ear cress).